A 230-amino-acid polypeptide reads, in one-letter code: UPF0758 protein Daud_1467 (230 aa).

Positions 108-230 (TVRTPEEAAG…FTSLKLEGLF (123 aa)) constitute an MPN domain. Residues histidine 179, histidine 181, and aspartate 192 each contribute to the Zn(2+) site. The JAMM motif motif lies at 179 to 192 (HNHPSGDPAPSPQD).

It belongs to the UPF0758 family.

This chain is UPF0758 protein Daud_1467, found in Desulforudis audaxviator (strain MP104C).